Reading from the N-terminus, the 619-residue chain is Chaperone protein HscA homolog (619 aa).

The protein belongs to the heat shock protein 70 family.

Functionally, chaperone involved in the maturation of iron-sulfur cluster-containing proteins. Has a low intrinsic ATPase activity which is markedly stimulated by HscB. In Pseudomonas paraeruginosa (strain DSM 24068 / PA7) (Pseudomonas aeruginosa (strain PA7)), this protein is Chaperone protein HscA homolog.